The sequence spans 399 residues: Centrosomal protein 43 (399 aa).

The region spanning 70–102 is the LisH domain; it reads DGRLVASLVAEFLQFFNLDFTLAVFHPETSTIQ. 2 disordered regions span residues 142–216 and 236–311; these read PASV…SKSS and DARD…KRGS. A phosphoserine mark is found at Ser-152 and Ser-160. A compositionally biased stretch (polar residues) spans 163–172; the sequence is GKSSANSTPS. Thr-170 bears the Phosphothreonine mark. Basic residues predominate over residues 175–186; that stretch reads PRYKGQGKKKTI. Residues 197-216 show a composition bias toward low complexity; the sequence is SETSQSEPSVSLSESKSKSS. At Ser-202 the chain carries Phosphoserine. A compositionally biased stretch (acidic residues) spans 246–256; the sequence is DGDDVEGDSFF. The segment covering 259 to 275 has biased composition (basic and acidic residues); that stretch reads PIPKPEKTYGWRAEPRK. Low complexity predominate over residues 290–302; that stretch reads RSGLSSLAGAPSL. A phosphoserine mark is found at Ser-301 and Ser-326. Residues 328 to 354 are disordered; the sequence is GLGTGEDEDYADDFNSASHRSEKSELS. At Tyr-337 the chain carries Phosphotyrosine.

The protein belongs to the CEP43 family. As to quaternary structure, homodimer. Part of a ternary complex that contains CEP350, CEP43 and MAPRE1. Interacts directly with CEP350 and MAPRE1. Interacts with CEP19. Interacts (via N-terminus) with CEP350 (via C-terminus).

It localises to the cytoplasm. The protein localises to the cytoskeleton. Its subcellular location is the microtubule organizing center. It is found in the centrosome. The protein resides in the centriole. It localises to the cilium basal body. Its function is as follows. Required for anchoring microtubules to the centrosomes. Required for ciliation. The chain is Centrosomal protein 43 from Mus musculus (Mouse).